The sequence spans 210 residues: Proteasome subunit beta (210 aa).

Residues methionine 1–glycine 9 constitute a propeptide, removed in mature form; by autocatalysis. Threonine 10 acts as the Nucleophile in catalysis.

It belongs to the peptidase T1B family. The 20S proteasome core is composed of 14 alpha and 14 beta subunits that assemble into four stacked heptameric rings, resulting in a barrel-shaped structure. The two inner rings, each composed of seven catalytic beta subunits, are sandwiched by two outer rings, each composed of seven alpha subunits. The catalytic chamber with the active sites is on the inside of the barrel. Has a gated structure, the ends of the cylinder being occluded by the N-termini of the alpha-subunits. Is capped at one or both ends by the proteasome regulatory ATPase, PAN.

The protein resides in the cytoplasm. It catalyses the reaction Cleavage of peptide bonds with very broad specificity.. Its activity is regulated as follows. The formation of the proteasomal ATPase PAN-20S proteasome complex, via the docking of the C-termini of PAN into the intersubunit pockets in the alpha-rings, triggers opening of the gate for substrate entry. Interconversion between the open-gate and close-gate conformations leads to a dynamic regulation of the 20S proteasome proteolysis activity. In terms of biological role, component of the proteasome core, a large protease complex with broad specificity involved in protein degradation. The chain is Proteasome subunit beta from Methanosarcina mazei (strain ATCC BAA-159 / DSM 3647 / Goe1 / Go1 / JCM 11833 / OCM 88) (Methanosarcina frisia).